A 156-amino-acid chain; its full sequence is Cyanate hydratase (156 aa).

Catalysis depends on residues Arg-96, Glu-99, and Ser-122.

This sequence belongs to the cyanase family. Homodecamer composed of five homodimers.

It carries out the reaction cyanate + hydrogencarbonate + 3 H(+) = NH4(+) + 2 CO2. In terms of biological role, catalyzes the reaction of cyanate with bicarbonate to produce ammonia and carbon dioxide. The sequence is that of Cyanate hydratase (cynS) from Escherichia coli O157:H7.